Consider the following 226-residue polypeptide: ATP synthase subunit a (226 aa).

6 helical membrane passes run 17-37, 79-99, 105-125, 134-154, 176-196, and 199-219; these read FSYF…AMMA, LVAT…IPGF, SLNL…FEGI, FAHF…IEIV, LFLM…AYVL, and FMAF…LAGA.

It belongs to the ATPase A chain family. In terms of assembly, F-type ATPases have 2 components, CF(1) - the catalytic core - and CF(0) - the membrane proton channel. CF(1) has five subunits: alpha(3), beta(3), gamma(1), delta(1), epsilon(1). CF(0) has three main subunits: a(1), b(2) and c(9-12). The alpha and beta chains form an alternating ring which encloses part of the gamma chain. CF(1) is attached to CF(0) by a central stalk formed by the gamma and epsilon chains, while a peripheral stalk is formed by the delta and b chains.

It localises to the cell inner membrane. Key component of the proton channel; it plays a direct role in the translocation of protons across the membrane. This chain is ATP synthase subunit a, found in Campylobacter jejuni subsp. jejuni serotype O:23/36 (strain 81-176).